A 317-amino-acid chain; its full sequence is Cyclin-dependent kinase 1 (317 aa).

A Protein kinase domain is found at 7–292 (YQRQEKVGEG…AKRALIHPYF (286 aa)). Residues 13-21 (VGEGTYGVV) and K37 contribute to the ATP site. T17 carries the phosphothreonine modification. The residue at position 18 (Y18) is a Phosphotyrosine; by SWE1. D133 acts as the Proton acceptor in catalysis. The residue at position 166 (T166) is a Phosphothreonine; by CAK. Residues 296 to 317 (DDRDHNNYNEDNIGIDKHQNMQ) are disordered.

The protein belongs to the protein kinase superfamily. CMGC Ser/Thr protein kinase family. CDC2/CDKX subfamily. Forms several complexes with cyclins CCN1, CLB2, CLN3, and HGC1. The CDC28-CCN1 complex associates with septin CDC11 upon hyphal induction. Interacts with IQG1, RFA2, and HSP90. Post-translationally, phosphorylated at Tyr-18 by SWE1 in a cell cycle-dependent manner. Yeast-form and hyphal cells display similar dynamics of phosphorylation and dephosphorylation of Tyr-18. Tyr-18 phosphorylation leads to inhibition of CDC28 kinase activity.

It catalyses the reaction L-seryl-[protein] + ATP = O-phospho-L-seryl-[protein] + ADP + H(+). The enzyme catalyses L-threonyl-[protein] + ATP = O-phospho-L-threonyl-[protein] + ADP + H(+). Its activity is regulated as follows. Phosphorylation at Thr-17 or Tyr-18 inactivates the enzyme, while phosphorylation at Thr-166 activates it. Its function is as follows. Cyclin-dependent kinase that acts as a master regulator of the mitotic and meiotic cell cycles. May drive the G1-S transition. Plays a role in mitotic exit. Plays a role in the expression of morphology-related transcription factors, and especially hyphae-specific genes. Binds distinct cyclin subunits as cells progress through the division cycle or flamentous growth. The CDC28-CLB2 complex regulates cytokinesis partly by phosphorylating the actomyosin ring component IQG1. The CDC28-CLN3 complex phosphorylates SLA1 which regulates cortical actin patch dynamics. The CDC28-CCN1 complex phosphorylates CDC11 and SEC2 upon induction of filamentous growth. The CDC28-HGC1 complex also phosphorylates SEC2 and maintains CDC11 phosphorylation throughout hyphal growth. Moreover, the CDC28-HGC1 complex phosphorylates and prevents RGA2 from localizing to hyphal tips, leading to localized CDC42 activation for hyphal extension. CDC28-HGC1 phosphorylation of EFG1 represses cell separation genes during hyphal growth. Additional substrates for CDC28 are RFA2 in G1-phase; MOB2, which is required for the maintenance of polarisome components and for inhibition of cell separation in hyphae; and GIN4 to regulate its association to SEP7 and subsequent septin ring assembly. In Candida albicans (strain SC5314 / ATCC MYA-2876) (Yeast), this protein is Cyclin-dependent kinase 1.